Here is a 508-residue protein sequence, read N- to C-terminus: Aspartic proteinase A3 (508 aa).

The N-terminal stretch at 1–25 is a signal peptide; it reads MGTRFQSFLLVFLLSCLILISTASC. The propeptide at 26–69 is activation peptide; the sequence is ERNGDGTIRIGLKKRKLDRSNRLASQLFLKNRGSHWSPKHYFRL. The Peptidase A1 domain occupies 87-505; that stretch reads YYGDITIGTP…DYGKGRVGFA (419 aa). Asp-105 is an active-site residue. 2 disulfide bridges follow: Cys-118–Cys-124 and Cys-283–Cys-287. Asp-292 is an active-site residue. The Saposin B-type domain maps to 317-419; sequence IVSRECKAVV…AELCDHIPTQ (103 aa). Disulfide bonds link Cys-322–Cys-413, Cys-347–Cys-385, Cys-353–Cys-382, and Cys-427–Cys-464. Asn-399 carries an N-linked (GlcNAc...) asparagine glycan.

This sequence belongs to the peptidase A1 family. Expressed in petals, carpels and seed pods.

Its subcellular location is the secreted. Involved in the processing and degradation of storage proteins. In Arabidopsis thaliana (Mouse-ear cress), this protein is Aspartic proteinase A3 (APA3).